Reading from the N-terminus, the 357-residue chain is tRNA-specific 2-thiouridylase MnmA (357 aa).

ATP is bound by residues Ala-3 to Ser-10 and Leu-29. The Nucleophile role is filled by Cys-98. The cysteines at positions 98 and 196 are disulfide-linked. Residue Gly-122 participates in ATP binding. The tract at residues Lys-146–Gln-148 is interaction with tRNA. The active-site Cysteine persulfide intermediate is the Cys-196. Positions Arg-302–Tyr-303 are interaction with tRNA.

Belongs to the MnmA/TRMU family.

The protein resides in the cytoplasm. It carries out the reaction S-sulfanyl-L-cysteinyl-[protein] + uridine(34) in tRNA + AH2 + ATP = 2-thiouridine(34) in tRNA + L-cysteinyl-[protein] + A + AMP + diphosphate + H(+). Functionally, catalyzes the 2-thiolation of uridine at the wobble position (U34) of tRNA, leading to the formation of s(2)U34. This Moorella thermoacetica (strain ATCC 39073 / JCM 9320) protein is tRNA-specific 2-thiouridylase MnmA.